Consider the following 99-residue polypeptide: Malonate decarboxylase acyl carrier protein (99 aa).

Residue serine 25 is modified to O-(phosphoribosyl dephospho-coenzyme A)serine.

Covalently binds the prosthetic group of malonate decarboxylase.

It is found in the cytoplasm. In terms of biological role, subunit of malonate decarboxylase, it is an acyl carrier protein to which acetyl and malonyl thioester residues are bound via a 2'-(5''-phosphoribosyl)-3'-dephospho-CoA prosthetic group and turn over during the catalytic mechanism. In Klebsiella pneumoniae, this protein is Malonate decarboxylase acyl carrier protein (mdcC).